The chain runs to 214 residues: MRQHVNPLSQFFQLPLSLPSKNILFEKSHYPIHLDIGSAKGEFLIELATKYPDWNFVGLEIREPLVSLCEKKRRKLELTNLKFLFCNVNVSLDEWLSDLDFGQLKRVSIQFPDPWFKRKHFKRRVLNTNILNSIAKSMSKDGEIFIQSDILKLIEYMTNTIDENRYFTRKNVGDLRSIDKNPYDVMTDREIFSLKKNLLIYRVMYIRNSLLFTN.

Positions 35, 60, 87, and 113 each coordinate S-adenosyl-L-methionine. Asp-113 is a catalytic residue. Substrate contacts are provided by Lys-117 and Asp-149.

It belongs to the class I-like SAM-binding methyltransferase superfamily. TrmB family.

It carries out the reaction guanosine(46) in tRNA + S-adenosyl-L-methionine = N(7)-methylguanosine(46) in tRNA + S-adenosyl-L-homocysteine. Its pathway is tRNA modification; N(7)-methylguanine-tRNA biosynthesis. Its function is as follows. Catalyzes the formation of N(7)-methylguanine at position 46 (m7G46) in tRNA. In Prochlorococcus marinus (strain NATL1A), this protein is tRNA (guanine-N(7)-)-methyltransferase.